The primary structure comprises 207 residues: Holliday junction branch migration complex subunit RuvA (207 aa).

The segment at Met-1 to His-65 is domain I. Residues Ser-66–Glu-144 are domain II. The tract at residues Thr-145 to Thr-150 is flexible linker. The tract at residues Thr-150–Asp-207 is domain III.

It belongs to the RuvA family. Homotetramer. Forms an RuvA(8)-RuvB(12)-Holliday junction (HJ) complex. HJ DNA is sandwiched between 2 RuvA tetramers; dsDNA enters through RuvA and exits via RuvB. An RuvB hexamer assembles on each DNA strand where it exits the tetramer. Each RuvB hexamer is contacted by two RuvA subunits (via domain III) on 2 adjacent RuvB subunits; this complex drives branch migration. In the full resolvosome a probable DNA-RuvA(4)-RuvB(12)-RuvC(2) complex forms which resolves the HJ.

The protein localises to the cytoplasm. Functionally, the RuvA-RuvB-RuvC complex processes Holliday junction (HJ) DNA during genetic recombination and DNA repair, while the RuvA-RuvB complex plays an important role in the rescue of blocked DNA replication forks via replication fork reversal (RFR). RuvA specifically binds to HJ cruciform DNA, conferring on it an open structure. The RuvB hexamer acts as an ATP-dependent pump, pulling dsDNA into and through the RuvAB complex. HJ branch migration allows RuvC to scan DNA until it finds its consensus sequence, where it cleaves and resolves the cruciform DNA. The polypeptide is Holliday junction branch migration complex subunit RuvA (Chlamydia pneumoniae (Chlamydophila pneumoniae)).